A 61-amino-acid polypeptide reads, in one-letter code: Probable tautomerase BA_5626/GBAA_5626/BAS5226 (61 aa).

The active-site Proton acceptor; via imino nitrogen is Pro-2.

Belongs to the 4-oxalocrotonate tautomerase family.

The chain is Probable tautomerase BA_5626/GBAA_5626/BAS5226 from Bacillus anthracis.